The primary structure comprises 450 residues: Glutamyl-tRNA reductase (450 aa).

Substrate contacts are provided by residues 45–48 (TCNR), serine 107, 112–114 (ERE), and glutamine 118. The Nucleophile role is filled by cysteine 46. 196-201 (GTGAYA) contributes to the NADP(+) binding site.

Belongs to the glutamyl-tRNA reductase family. Homodimer.

The enzyme catalyses (S)-4-amino-5-oxopentanoate + tRNA(Glu) + NADP(+) = L-glutamyl-tRNA(Glu) + NADPH + H(+). It functions in the pathway porphyrin-containing compound metabolism; protoporphyrin-IX biosynthesis; 5-aminolevulinate from L-glutamyl-tRNA(Glu): step 1/2. Its function is as follows. Catalyzes the NADPH-dependent reduction of glutamyl-tRNA(Glu) to glutamate 1-semialdehyde (GSA). The chain is Glutamyl-tRNA reductase from Micrococcus luteus (strain ATCC 4698 / DSM 20030 / JCM 1464 / CCM 169 / CCUG 5858 / IAM 1056 / NBRC 3333 / NCIMB 9278 / NCTC 2665 / VKM Ac-2230) (Micrococcus lysodeikticus).